Reading from the N-terminus, the 250-residue chain is MAVTKLVLVRHGESQWNNENRFTGWYDVDLSEKGRTEAKAAGELLKNEGFAFDFAYTSVLKRAIHTLWNILDELDQAWLPTEKSWKLNERHYGALQGLNKAETAEKYGDEQVKQWRRGFAVTPPELTKDDERYPGHDPRYSALTEQELPLTESLALTIDRVIPYWDEEILPRIKSGERVIVAAHGNSLRALVKYLDNLSEDEILELNIPTGVPLVYEFDENFKPIKRYYLGNADEIAAKAAAVANQGKAK.

Substrate is bound by residues 10 to 17 (RHGESQWN), 23 to 24 (TG), R62, 89 to 92 (ERHY), K100, 116 to 117 (RR), and 185 to 186 (GN). Residue H11 is the Tele-phosphohistidine intermediate of the active site. E89 functions as the Proton donor/acceptor in the catalytic mechanism.

The protein belongs to the phosphoglycerate mutase family. BPG-dependent PGAM subfamily. In terms of assembly, homodimer.

It carries out the reaction (2R)-2-phosphoglycerate = (2R)-3-phosphoglycerate. Its pathway is carbohydrate degradation; glycolysis; pyruvate from D-glyceraldehyde 3-phosphate: step 3/5. Its function is as follows. Catalyzes the interconversion of 2-phosphoglycerate and 3-phosphoglycerate. In Serratia proteamaculans (strain 568), this protein is 2,3-bisphosphoglycerate-dependent phosphoglycerate mutase.